The following is a 107-amino-acid chain: MQRLPAATRATLILSLAFASLHSACSAEASSSNSSSLTAHHPDPGTLEQCLNVDFCPQAARCCRTGVDEYGWIAAAVGWSLWFLTLILLCVDKLMKLTPDEPKDLQA.

The N-terminal stretch at methionine 1 to alanine 27 is a signal peptide. The Extracellular portion of the chain corresponds to glutamate 28 to tyrosine 70. Residues glycine 71–valine 91 form a helical membrane-spanning segment. The Cytoplasmic segment spans residues aspartate 92–alanine 107.

The protein resides in the membrane. This chain is Transmembrane protein 213 (TMEM213), found in Homo sapiens (Human).